The primary structure comprises 153 residues: Insulin-like growth factor 1 (153 aa).

Residues 49–77 (GPETLCGAELVDALQFVCGDRGFYFNKPT) are b. 3 disulfides stabilise this stretch: Cys-54–Cys-96, Cys-66–Cys-109, and Cys-95–Cys-100. A c region spans residues 78-89 (GYGSSSRRAPQT). Positions 90 to 110 (GIVDECCFRSCDLRRLEMYCA) are a. The tract at residues 111–118 (PLKPAKSA) is d. Positions 119–153 (RSVRAQRHTDMPKAQKEVHLKNASRGSAGNKNYRM) are cleaved as a propeptide — e peptide. The segment at 120–153 (SVRAQRHTDMPKAQKEVHLKNASRGSAGNKNYRM) is disordered. The span at 125–138 (RHTDMPKAQKEVHL) shows a compositional bias: basic and acidic residues. Polar residues predominate over residues 142–153 (SRGSAGNKNYRM).

This sequence belongs to the insulin family. In terms of assembly, forms a ternary complex with IGFR1 and ITGAV:ITGB3. Forms a ternary complex with IGFR1 and ITGA6:ITGB4. Forms a ternary complex with IGFBP3 and ALS.

It localises to the secreted. Functionally, the insulin-like growth factors, isolated from plasma, are structurally and functionally related to insulin but have a much higher growth-promoting activity. May be a physiological regulator of [1-14C]-2-deoxy-D-glucose (2DG) transport and glycogen synthesis in osteoblasts. Stimulates glucose transport in bone-derived osteoblastic (PyMS) cells and is effective at much lower concentrations than insulin, not only regarding glycogen and DNA synthesis but also with regard to enhancing glucose uptake. May play a role in synapse maturation. Ca(2+)-dependent exocytosis of IGF1 is required for sensory perception of smell in the olfactory bulb. Acts as a ligand for IGF1R. Binds to the alpha subunit of IGF1R, leading to the activation of the intrinsic tyrosine kinase activity which autophosphorylates tyrosine residues in the beta subunit thus initiating a cascade of down-stream signaling events leading to activation of the PI3K-AKT/PKB and the Ras-MAPK pathways. Binds to integrins ITGAV:ITGB3 and ITGA6:ITGB4. Its binding to integrins and subsequent ternary complex formation with integrins and IGFR1 are essential for IGF1 signaling. Induces the phosphorylation and activation of IGFR1, MAPK3/ERK1, MAPK1/ERK2 and AKT1. As part of the MAPK/ERK signaling pathway, acts as a negative regulator of apoptosis in cardiomyocytes via promotion of STUB1/CHIP-mediated ubiquitination and degradation of ICER-type isoforms of CREM. This is Insulin-like growth factor 1 from Rhinopithecus roxellana (Golden snub-nosed monkey).